Reading from the N-terminus, the 261-residue chain is Vacuolar iron transporter (261 aa).

Residues G66 to G86 traverse the membrane as a helical segment. E105, E108, E116, E119, and E154 together coordinate Fe cation. A run of 3 helical transmembrane segments spans residues M170 to I190, I197 to F217, and G233 to I253.

This sequence belongs to the CCC1 family.

The protein resides in the vacuole membrane. It carries out the reaction Fe(2+)(in) = Fe(2+)(out). In terms of biological role, vacuolar iron transporter involved in the transfer of iron ions from the cytosol to the vacuole for intracellular iron storage. This is Vacuolar iron transporter from Acanthamoeba castellanii (strain ATCC 30010 / Neff).